Consider the following 158-residue polypeptide: Endoribonuclease YbeY (158 aa).

Zn(2+) contacts are provided by His-118, His-122, and His-128.

It belongs to the endoribonuclease YbeY family. The cofactor is Zn(2+).

It localises to the cytoplasm. Single strand-specific metallo-endoribonuclease involved in late-stage 70S ribosome quality control and in maturation of the 3' terminus of the 16S rRNA. The chain is Endoribonuclease YbeY from Bartonella henselae (strain ATCC 49882 / DSM 28221 / CCUG 30454 / Houston 1) (Rochalimaea henselae).